The following is a 242-amino-acid chain: UDP-2,3-diacylglucosamine hydrolase (242 aa).

Residues D8, H10, D41, N79, and H114 each coordinate Mn(2+). Residue 79–80 coordinates substrate; it reads NR. Positions 122, 164, 167, and 195 each coordinate substrate. Mn(2+)-binding residues include H195 and H197.

It belongs to the LpxH family. Requires Mn(2+) as cofactor.

It is found in the cell inner membrane. The catalysed reaction is UDP-2-N,3-O-bis[(3R)-3-hydroxytetradecanoyl]-alpha-D-glucosamine + H2O = 2-N,3-O-bis[(3R)-3-hydroxytetradecanoyl]-alpha-D-glucosaminyl 1-phosphate + UMP + 2 H(+). Its pathway is glycolipid biosynthesis; lipid IV(A) biosynthesis; lipid IV(A) from (3R)-3-hydroxytetradecanoyl-[acyl-carrier-protein] and UDP-N-acetyl-alpha-D-glucosamine: step 4/6. In terms of biological role, hydrolyzes the pyrophosphate bond of UDP-2,3-diacylglucosamine to yield 2,3-diacylglucosamine 1-phosphate (lipid X) and UMP by catalyzing the attack of water at the alpha-P atom. Involved in the biosynthesis of lipid A, a phosphorylated glycolipid that anchors the lipopolysaccharide to the outer membrane of the cell. This chain is UDP-2,3-diacylglucosamine hydrolase, found in Vibrio parahaemolyticus serotype O3:K6 (strain RIMD 2210633).